The primary structure comprises 221 residues: MIRQIDFYGYPYVGIYAANTEQVVVLPPDLPQATVDLVAETLGTAVVRTLINESTLIGSMMTGNSNGFIVSDLTLDREANLLQEHGKVTRLKGKMTAAGNLILANDTAALVHPALTDKNIEAIEKTLKVEVRRGTIGGLKTVGMAGCATNKGILVHPRATEEELTVLEDLFKLPVDIGTVSFGSPLVGSAILATTKGLITGTRTSGPELGRIEDALGFIEE.

This sequence belongs to the eIF-6 family.

Its function is as follows. Binds to the 50S ribosomal subunit and prevents its association with the 30S ribosomal subunit to form the 70S initiation complex. The sequence is that of Translation initiation factor 6 from Methanocella arvoryzae (strain DSM 22066 / NBRC 105507 / MRE50).